A 459-amino-acid polypeptide reads, in one-letter code: Probable rhamnogalacturonase C (459 aa).

A signal peptide spans 1 to 18 (MRASILPLTLFLATLAGA). N36, N64, N77, N140, and N155 each carry an N-linked (GlcNAc...) asparagine glycan. A disulfide bridge links C39 with C65. D216 functions as the Proton donor in the catalytic mechanism. A disulfide bridge connects residues C218 and C235. N236 and N251 each carry an N-linked (GlcNAc...) asparagine glycan. H290 is an active-site residue. The N-linked (GlcNAc...) asparagine glycan is linked to N315. A disulfide bond links C337 and C343. A glycan (N-linked (GlcNAc...) asparagine) is linked at N356. C365 and C374 are joined by a disulfide.

It belongs to the glycosyl hydrolase 28 family.

It localises to the secreted. Functionally, pectinolytic enzymes consist of four classes of enzymes: pectine lyase, polygalacturonase, pectin methylesterase and rhamnogalacturonase. Hydrolyzes alpha-D-galacturonopyranosyl-(1,2)-alpha-L-rhamnopyranosyl linkages in the backbone of the hairy regions of pectins. The polypeptide is Probable rhamnogalacturonase C (rhgC) (Aspergillus niger (strain ATCC MYA-4892 / CBS 513.88 / FGSC A1513)).